A 142-amino-acid polypeptide reads, in one-letter code: gSG7 salivary protein (142 aa).

The first 25 residues, 1–25 (METKLVLALIACGVICLLQTTPTEA), serve as a signal peptide directing secretion. Disulfide bonds link C83-C138 and C106-C116.

Interacts with host coagulation factor XII (F12) (inactive and activated). Interacts with host high molecular weight kininogen (KNG1) (inactive and activated).

The protein resides in the secreted. With respect to regulation, zn(2+) modulates binding to host coagulation factor XII (F12) and high molecular weight kininogen (KNG1). Salivary protein with anticoagulant activity. Inhibits activation of host kallikrein-kinin system by preventing the reciprocal activation of coagulation factor XII (F12) and prekallikrein (KLKB1), and subsequent release of bradykinin. Inhibits host factor XII and high molecular weight kininogen (KNG1) binding to negatively charged surfaces. Weakly inhibits the alternative pathway of complement system activation in the host. The sequence is that of gSG7 salivary protein from Anopheles stephensi (Indo-Pakistan malaria mosquito).